The primary structure comprises 550 residues: Chaperonin GroEL (550 aa).

Residues threonine 30 to proline 33, lysine 51, aspartate 87 to threonine 91, glycine 414, and aspartate 494 each bind ATP.

It belongs to the chaperonin (HSP60) family. Forms a cylinder of 14 subunits composed of two heptameric rings stacked back-to-back. Interacts with the co-chaperonin GroES.

The protein resides in the cytoplasm. The enzyme catalyses ATP + H2O + a folded polypeptide = ADP + phosphate + an unfolded polypeptide.. In terms of biological role, together with its co-chaperonin GroES, plays an essential role in assisting protein folding. The GroEL-GroES system forms a nano-cage that allows encapsulation of the non-native substrate proteins and provides a physical environment optimized to promote and accelerate protein folding. The chain is Chaperonin GroEL from Buchnera aphidicola subsp. Thelaxes suberi.